We begin with the raw amino-acid sequence, 215 residues long: uncharacterized protein (215 aa).

The signal sequence occupies residues 1 to 17 (MKKVLASATILSLMLVG). Residues 17 to 110 (GCSNGGNDES…NKQQQSVQDN (94 aa)) form a disordered region. Cys-18 carries N-palmitoyl cysteine lipidation. Cys-18 carries S-diacylglycerol cysteine lipidation. Residues 25–69 (ESSHKDDSSKTEQKDKSSSQHDSKKDSKRNDTNNKQDNQENKSNK) show a composition bias toward basic and acidic residues. Over residues 70–95 (EQTSNQNSNAGEQRTSERPTTNSNGI) the composition is skewed to polar residues. The span at 96-110 (SSDNQNKQQQSVQDN) shows a compositional bias: low complexity.

It localises to the cell membrane. This is an uncharacterized protein from Staphylococcus epidermidis (strain ATCC 12228 / FDA PCI 1200).